A 507-amino-acid polypeptide reads, in one-letter code: Probable cytosol aminopeptidase (507 aa).

Residues Lys269 and Asp274 each contribute to the Mn(2+) site. Lys281 is a catalytic residue. Residues Asp292, Asp351, and Glu353 each contribute to the Mn(2+) site. Residue Arg355 is part of the active site.

It belongs to the peptidase M17 family. Requires Mn(2+) as cofactor.

It is found in the cytoplasm. The enzyme catalyses Release of an N-terminal amino acid, Xaa-|-Yaa-, in which Xaa is preferably Leu, but may be other amino acids including Pro although not Arg or Lys, and Yaa may be Pro. Amino acid amides and methyl esters are also readily hydrolyzed, but rates on arylamides are exceedingly low.. It carries out the reaction Release of an N-terminal amino acid, preferentially leucine, but not glutamic or aspartic acids.. Functionally, presumably involved in the processing and regular turnover of intracellular proteins. Catalyzes the removal of unsubstituted N-terminal amino acids from various peptides. The polypeptide is Probable cytosol aminopeptidase (Chromohalobacter salexigens (strain ATCC BAA-138 / DSM 3043 / CIP 106854 / NCIMB 13768 / 1H11)).